Here is a 400-residue protein sequence, read N- to C-terminus: Methylthioribose kinase (400 aa).

ATP contacts are provided by residues N40, K57, and E111–L113. D229 is a binding site for substrate. D246–E248 contacts ATP. R344 contacts substrate.

Belongs to the methylthioribose kinase family. In terms of assembly, homodimer.

The enzyme catalyses 5-(methylsulfanyl)-D-ribose + ATP = 5-(methylsulfanyl)-alpha-D-ribose 1-phosphate + ADP + H(+). The protein operates within amino-acid biosynthesis; L-methionine biosynthesis via salvage pathway; S-methyl-5-thio-alpha-D-ribose 1-phosphate from S-methyl-5'-thioadenosine (hydrolase route): step 2/2. In terms of biological role, catalyzes the phosphorylation of methylthioribose into methylthioribose-1-phosphate. The sequence is that of Methylthioribose kinase from Pectobacterium atrosepticum (strain SCRI 1043 / ATCC BAA-672) (Erwinia carotovora subsp. atroseptica).